The chain runs to 259 residues: MALLELERISAQYPGASTPVLADINLSLGPRQLLVALGPSGSGKTSLLNLIAGFVAPSGGRITLDGAPVQGPGAERGVVFQDDALLPWQDVLANVAFGLELAGVPRAQREAKAREMLALVDLAGFAERRIWQLSGGQKQRVGLARALAADPRVLLMDEPFGALDAFTREQMQELLLQVWQRTAKPVFLITHDIEEAVFLATELVLLAPNPGRVVERLQLDFGQRYAAGESARAIKSDPRFIETREHVLARVFSQRQESA.

Residues 4 to 233 (LELERISAQY…RYAAGESARA (230 aa)) form the ABC transporter domain. 38–45 (GPSGSGKT) serves as a coordination point for ATP.

This sequence belongs to the ABC transporter superfamily. Taurine importer (TC 3.A.1.17.1) family. As to quaternary structure, the complex is composed of two ATP-binding proteins (TauB), two transmembrane proteins (TauC) and a solute-binding protein (TauA).

Its subcellular location is the cell inner membrane. It catalyses the reaction taurine(out) + ATP + H2O = taurine(in) + ADP + phosphate + H(+). Part of the ABC transporter complex TauABC involved in taurine import. Responsible for energy coupling to the transport system. This chain is Taurine import ATP-binding protein TauB, found in Pseudomonas entomophila (strain L48).